Reading from the N-terminus, the 322-residue chain is Allergen Asp f 4 (322 aa).

The signal sequence occupies residues 1-20 (MQLKNSMLLLTALAAGSSVA). The segment covering 80–105 (AAAAAASTPEPSSSHSDSSSSSGVSA) has biased composition (low complexity). Positions 80 to 109 (AAAAAASTPEPSSSHSDSSSSSGVSADWTN) are disordered.

Its subcellular location is the secreted. The polypeptide is Allergen Asp f 4 (Aspergillus fumigatus (strain ATCC MYA-4609 / CBS 101355 / FGSC A1100 / Af293) (Neosartorya fumigata)).